A 433-amino-acid chain; its full sequence is Adenylosuccinate synthetase (433 aa).

Residues 11 to 17 and 39 to 41 each bind GTP; these read GDEGKGK and GHT. Aspartate 12 acts as the Proton acceptor in catalysis. Positions 12 and 39 each coordinate Mg(2+). IMP-binding positions include 12–15, 37–40, threonine 134, arginine 148, asparagine 230, threonine 245, and arginine 309; these read DEGK and NAGH. Histidine 40 serves as the catalytic Proton donor. 305 to 311 provides a ligand contact to substrate; sequence VTTGRKR. GTP is bound by residues arginine 311, 337-339, and 419-421; these read KLD and GTG.

This sequence belongs to the adenylosuccinate synthetase family. In terms of assembly, homodimer. It depends on Mg(2+) as a cofactor.

It is found in the cytoplasm. It catalyses the reaction IMP + L-aspartate + GTP = N(6)-(1,2-dicarboxyethyl)-AMP + GDP + phosphate + 2 H(+). Its pathway is purine metabolism; AMP biosynthesis via de novo pathway; AMP from IMP: step 1/2. Plays an important role in the de novo pathway and in the salvage pathway of purine nucleotide biosynthesis. Catalyzes the first committed step in the biosynthesis of AMP from IMP. The sequence is that of Adenylosuccinate synthetase from Eremothecium gossypii (strain ATCC 10895 / CBS 109.51 / FGSC 9923 / NRRL Y-1056) (Yeast).